A 517-amino-acid polypeptide reads, in one-letter code: Zinc finger protein AEBP2 (517 aa).

The interval 1–229 is disordered; it reads MAAAITDMAD…DSEDSISSTI (229 aa). An N-acetylalanine modification is found at Ala-2. Phosphoserine occurs at positions 18 and 24. The segment covering 36 to 51 has biased composition (acidic residues); the sequence is PEEEEEEEEEEEEAEA. Residues 61–78 are compositionally biased toward gly residues; sequence GGSGGGGGGGGGGVGGGE. Residues 94 to 121 are compositionally biased toward acidic residues; it reads GEDEDEEEDDEEEEDESSSSGGGEEESS. The segment covering 122 to 150 has biased composition (low complexity); it reads AESLVGSSGGSSSDETRSLSPGAASSSSG. Position 141 is a phosphoserine (Ser-141). Over residues 152-163 the composition is skewed to basic and acidic residues; the sequence is GDGKEGLEEPKG. Gly residues-rich tracts occupy residues 166 to 175 and 185 to 196; these read GSQGGGGGGS and GDEGYGTGGGGS. Phosphoserine occurs at positions 206, 210, and 211. Residues 209-294 are interaction with RBBP4; it reads MSSDGEPLSR…IHVDGQRGGV (86 aa). A C2H2-type 1 zinc finger spans residues 261-286; that stretch reads YNCCWDQCQACFNSSPDLADHIRSIH. The segment at 300–322 adopts a C2H2-type 2; degenerate zinc-finger fold; sequence KGCKVYNTPSTSQSWLQRHMLTH. Residues 328–352 form a C2H2-type 3 zinc finger; it reads FKCVVGGCNASFASQGGLARHVPTH. The segment covering 352-365 has biased composition (polar residues); the sequence is HFSQQNSSKVSSQP. The interval 352–394 is disordered; it reads HFSQQNSSKVSSQPKAKEESPSKAGMNKRRKLKNKRRRSLPRP. Positions 377–392 are enriched in basic residues; it reads MNKRRKLKNKRRRSLP. Ser-390 is subject to Phosphoserine. The interval 407–478 is interaction with SUZ12; it reads RHRAICFNLS…QLKTKVVHLS (72 aa). The important for nucleosome binding activity of the PRC2 complex stretch occupies residues 495–517; sequence TMPQKRLKRTLIRKVFNLYLSKQ.

It belongs to the AEBP2/jing C2H2-type zinc-finger family. Self-associates. Associates with the PRC2 complex, which consists of the core components EED, EZH1 or EZH2, SUZ12, and RBBP4, and various combinations of accessory subunits including AEBP2, JARID2, PHF19, MTF2 and EPOP. Found in a monomeric PRC2.2 (class 2) complex consisting of at least SUZ12, RBBP4, AEBP2 and JARID2. Within the PRC2 complex, interacts directly with SUZ12; competes with PHF19 for SUZ12 binding. Interacts with EED, EZH2, and RBBP4. May also interact with RBBP7.

Its subcellular location is the nucleus. Acts as an accessory subunit for the core Polycomb repressive complex 2 (PRC2), which mediates histone H3K27 (H3K27me3) trimethylation on chromatin leading to transcriptional repression of the affected target gene. Plays a role in nucleosome localization of the PRC2 complex. The protein is Zinc finger protein AEBP2 (AEBP2) of Homo sapiens (Human).